The primary structure comprises 470 residues: Ribulose bisphosphate carboxylase large chain (470 aa).

Residues Asn115 and Thr165 each coordinate substrate. The active-site Proton acceptor is Lys167. Lys169 contributes to the substrate binding site. Residues Lys193, Asp195, and Glu196 each coordinate Mg(2+). Residue Lys193 is modified to N6-carboxylysine. His286 acts as the Proton acceptor in catalysis. Positions 287, 319, and 371 each coordinate substrate.

The protein belongs to the RuBisCO large chain family. Type I subfamily. As to quaternary structure, heterohexadecamer of 8 large chains and 8 small chains. Forms a CsoS2-CsoS1-RuBisCO complex. Mg(2+) is required as a cofactor.

The protein localises to the carboxysome. It carries out the reaction 2 (2R)-3-phosphoglycerate + 2 H(+) = D-ribulose 1,5-bisphosphate + CO2 + H2O. It catalyses the reaction D-ribulose 1,5-bisphosphate + O2 = 2-phosphoglycolate + (2R)-3-phosphoglycerate + 2 H(+). Its function is as follows. RuBisCO catalyzes two reactions: the carboxylation of D-ribulose 1,5-bisphosphate, the primary event in carbon dioxide fixation, as well as the oxidative fragmentation of the pentose substrate in the photorespiration process. Both reactions occur simultaneously and in competition at the same active site. The sequence is that of Ribulose bisphosphate carboxylase large chain from Prochlorococcus marinus (strain MIT 9313).